Here is a 435-residue protein sequence, read N- to C-terminus: Zinc finger and BTB domain-containing protein 25 (435 aa).

The BTB domain maps to 1–107; it reads MDTASHSLVL…GIRFLHADYL (107 aa). Residues K142, K148, K198, and K204 each participate in a glycyl lysine isopeptide (Lys-Gly) (interchain with G-Cter in SUMO2) cross-link. The C2H2-type 1 zinc-finger motif lies at 238–260; that stretch reads HLCHYCGERFDSRSNLRQHLHTH. Glycyl lysine isopeptide (Lys-Gly) (interchain with G-Cter in SUMO2) cross-links involve residues K303 and K330. Residues 349-371 form a C2H2-type 2 zinc finger; sequence MSCTICGHKFPRKSQLLEHMYTH. Residue K405 forms a Glycyl lysine isopeptide (Lys-Gly) (interchain with G-Cter in SUMO2) linkage.

As to expression, expressed mainly in hematopoietic cells and testis.

The protein localises to the nucleus. Functionally, may be involved in transcriptional regulation. The chain is Zinc finger and BTB domain-containing protein 25 (ZBTB25) from Homo sapiens (Human).